Consider the following 248-residue polypeptide: 5'-nucleotidase SurE (248 aa).

Residues D8, D9, S39, and N91 each contribute to the a divalent metal cation site.

It belongs to the SurE nucleotidase family. Requires a divalent metal cation as cofactor.

The protein localises to the cytoplasm. It carries out the reaction a ribonucleoside 5'-phosphate + H2O = a ribonucleoside + phosphate. Functionally, nucleotidase that shows phosphatase activity on nucleoside 5'-monophosphates. The polypeptide is 5'-nucleotidase SurE (Neisseria meningitidis serogroup B (strain ATCC BAA-335 / MC58)).